We begin with the raw amino-acid sequence, 779 residues long: Probable ATP-dependent RNA helicase DHX40 (779 aa).

Positions methionine 1–phenylalanine 53 are disordered. Residues arginine 13–glycine 41 are compositionally biased toward basic and acidic residues. Positions cysteine 42–phenylalanine 53 are enriched in polar residues. In terms of domain architecture, Helicase ATP-binding spans isoleucine 63–proline 231. Residue glycine 76–threonine 83 coordinates ATP. The DEAH box motif lies at aspartate 173 to histidine 176. The Helicase C-terminal domain maps to threonine 263–alanine 442. Residues serine 737–glycine 779 are disordered.

It belongs to the DEAD box helicase family. DEAH subfamily.

The catalysed reaction is ATP + H2O = ADP + phosphate + H(+). Probable ATP-dependent RNA helicase. The chain is Probable ATP-dependent RNA helicase DHX40 (DHX40) from Pongo abelii (Sumatran orangutan).